The chain runs to 669 residues: DNA ligase (669 aa).

Residues 34-38, 83-84, and glutamate 114 contribute to the NAD(+) site; these read DAEYD and SL. The active-site N6-AMP-lysine intermediate is the lysine 116. 4 residues coordinate NAD(+): arginine 137, glutamate 171, lysine 287, and lysine 311. 4 residues coordinate Zn(2+): cysteine 405, cysteine 408, cysteine 423, and cysteine 428. The 79-residue stretch at 591-669 folds into the BRCT domain; it reads NIASYFAGKT…EERFLQELNK (79 aa).

The protein belongs to the NAD-dependent DNA ligase family. LigA subfamily. It depends on Mg(2+) as a cofactor. Requires Mn(2+) as cofactor.

It carries out the reaction NAD(+) + (deoxyribonucleotide)n-3'-hydroxyl + 5'-phospho-(deoxyribonucleotide)m = (deoxyribonucleotide)n+m + AMP + beta-nicotinamide D-nucleotide.. In terms of biological role, DNA ligase that catalyzes the formation of phosphodiester linkages between 5'-phosphoryl and 3'-hydroxyl groups in double-stranded DNA using NAD as a coenzyme and as the energy source for the reaction. It is essential for DNA replication and repair of damaged DNA. In Bacillus cytotoxicus (strain DSM 22905 / CIP 110041 / 391-98 / NVH 391-98), this protein is DNA ligase.